Reading from the N-terminus, the 227-residue chain is (S)-2-haloacid dehalogenase 1 (227 aa).

The Nucleophile role is filled by Asp10. An (S)-2-haloacid contacts are provided by residues 11 to 12, Arg41, and 118 to 119; these read AY and SN. The interval 175-180 is important for catalytic activity; that stretch reads SSNAWD.

Belongs to the HAD-like hydrolase superfamily. S-2-haloalkanoic acid dehalogenase family.

It catalyses the reaction an (S)-2-haloacid + H2O = a (2R)-2-hydroxycarboxylate + a halide anion + H(+). The catalysed reaction is (S)-2-chloropropanoate + H2O = (R)-lactate + chloride + H(+). In terms of biological role, catalyzes the hydrolytic dehalogenation of small (S)-2-haloalkanoic acids to yield the corresponding (R)-2-hydroxyalkanoic acids. Acts on acids of short chain lengths, C(2) to C(4), with inversion of configuration at C-2. Active with 2-halogenated carboxylic acids and converts only the S-isomer (or L-isomer) of 2-chloropropionic acid with inversion of configuration to produce R-lactate (or D-isomer). In Pseudomonas sp. (strain CBS-3), this protein is (S)-2-haloacid dehalogenase 1.